A 389-amino-acid chain; its full sequence is Lipid-A-disaccharide synthase (389 aa).

Belongs to the LpxB family.

The catalysed reaction is a lipid X + a UDP-2-N,3-O-bis[(3R)-3-hydroxyacyl]-alpha-D-glucosamine = a lipid A disaccharide + UDP + H(+). The protein operates within bacterial outer membrane biogenesis; LPS lipid A biosynthesis. Functionally, condensation of UDP-2,3-diacylglucosamine and 2,3-diacylglucosamine-1-phosphate to form lipid A disaccharide, a precursor of lipid A, a phosphorylated glycolipid that anchors the lipopolysaccharide to the outer membrane of the cell. The polypeptide is Lipid-A-disaccharide synthase (Paraburkholderia phymatum (strain DSM 17167 / CIP 108236 / LMG 21445 / STM815) (Burkholderia phymatum)).